The chain runs to 858 residues: Adenylate cyclase, germination specific (858 aa).

Topologically, residues 1–18 (MKKTFVKILSKSYVEGYP) are cytoplasmic. The chain crosses the membrane as a helical; Signal-anchor for type II membrane protein span at residues 19–41 (VGFFIGLIILAIFGSMVCIFSFM). The Extracellular segment spans residues 42 to 858 (HYSEEENSNI…DENVESKKNK (817 aa)). The 232-residue stretch at 86–317 (VNPNFDRNDF…DCVLKLWIFT (232 aa)) folds into the CHASE domain. In terms of domain architecture, Guanylate cyclase spans 396–526 (CVFFLDIAGF…DTVNVASRME (131 aa)). 3 residues coordinate Mg(2+): Asp-401, Ile-402, and Asp-445. Disordered regions lie at residues 650 to 691 (YYYH…YHDT), 767 to 803 (SDNV…STNE), and 827 to 858 (ENCD…KKNK). Low complexity-rich tracts occupy residues 767-778 (SDNVNNYENNNN), 788-797 (GDNNNINDNN), and 834-849 (DNNN…NNND).

Belongs to the adenylyl cyclase class-4/guanylyl cyclase family.

It is found in the membrane. The catalysed reaction is ATP = 3',5'-cyclic AMP + diphosphate. Insensitive to guanine nucleotides. Has a large extracellular domain which may be involved in the recognition of an extracellular signal present during germination, leading to activation or inhibition of cAMP synthesis by the cytoplasmic domain. The sequence is that of Adenylate cyclase, germination specific (acgA) from Dictyostelium discoideum (Social amoeba).